We begin with the raw amino-acid sequence, 299 residues long: Oxygen-dependent coproporphyrinogen-III oxidase (299 aa).

S92 is a binding site for substrate. Mn(2+)-binding residues include H96 and H106. H106 functions as the Proton donor in the catalytic mechanism. 108 to 110 (NVR) serves as a coordination point for substrate. Residues H145 and H175 each contribute to the Mn(2+) site. The important for dimerization stretch occupies residues 240–275 (YVEFNLVWDRGTLFGLQTGGRTESILMSMPPLVRWE). 258-260 (GGR) lines the substrate pocket.

Belongs to the aerobic coproporphyrinogen-III oxidase family. Homodimer. Mn(2+) is required as a cofactor.

It is found in the cytoplasm. The catalysed reaction is coproporphyrinogen III + O2 + 2 H(+) = protoporphyrinogen IX + 2 CO2 + 2 H2O. Its pathway is porphyrin-containing compound metabolism; protoporphyrin-IX biosynthesis; protoporphyrinogen-IX from coproporphyrinogen-III (O2 route): step 1/1. Functionally, involved in the heme biosynthesis. Catalyzes the aerobic oxidative decarboxylation of propionate groups of rings A and B of coproporphyrinogen-III to yield the vinyl groups in protoporphyrinogen-IX. In Escherichia coli O8 (strain IAI1), this protein is Oxygen-dependent coproporphyrinogen-III oxidase.